Consider the following 340-residue polypeptide: Phosphate acyltransferase (340 aa).

The protein belongs to the PlsX family. Homodimer. Probably interacts with PlsY.

The protein resides in the cytoplasm. It carries out the reaction a fatty acyl-[ACP] + phosphate = an acyl phosphate + holo-[ACP]. Its pathway is lipid metabolism; phospholipid metabolism. Functionally, catalyzes the reversible formation of acyl-phosphate (acyl-PO(4)) from acyl-[acyl-carrier-protein] (acyl-ACP). This enzyme utilizes acyl-ACP as fatty acyl donor, but not acyl-CoA. This is Phosphate acyltransferase from Pseudomonas syringae pv. tomato (strain ATCC BAA-871 / DC3000).